Reading from the N-terminus, the 133-residue chain is Large ribosomal subunit protein bL20 (133 aa).

This sequence belongs to the bacterial ribosomal protein bL20 family.

Binds directly to 23S ribosomal RNA and is necessary for the in vitro assembly process of the 50S ribosomal subunit. It is not involved in the protein synthesizing functions of that subunit. The sequence is that of Large ribosomal subunit protein bL20 from Bartonella quintana (strain Toulouse) (Rochalimaea quintana).